The sequence spans 244 residues: 2-C-methyl-D-erythritol 4-phosphate cytidylyltransferase (244 aa).

This sequence belongs to the IspD/TarI cytidylyltransferase family. IspD subfamily.

It catalyses the reaction 2-C-methyl-D-erythritol 4-phosphate + CTP + H(+) = 4-CDP-2-C-methyl-D-erythritol + diphosphate. It participates in isoprenoid biosynthesis; isopentenyl diphosphate biosynthesis via DXP pathway; isopentenyl diphosphate from 1-deoxy-D-xylulose 5-phosphate: step 2/6. In terms of biological role, catalyzes the formation of 4-diphosphocytidyl-2-C-methyl-D-erythritol from CTP and 2-C-methyl-D-erythritol 4-phosphate (MEP). This Corynebacterium diphtheriae (strain ATCC 700971 / NCTC 13129 / Biotype gravis) protein is 2-C-methyl-D-erythritol 4-phosphate cytidylyltransferase.